We begin with the raw amino-acid sequence, 431 residues long: 3-phosphoshikimate 1-carboxyvinyltransferase (431 aa).

Residues lysine 23, serine 24, and arginine 28 each contribute to the 3-phosphoshikimate site. Lysine 23 contacts phosphoenolpyruvate. The phosphoenolpyruvate site is built by glycine 96 and arginine 124. 3-phosphoshikimate-binding residues include serine 169, glutamine 171, aspartate 317, and lysine 344. Glutamine 171 lines the phosphoenolpyruvate pocket. The active-site Proton acceptor is the aspartate 317. Residues arginine 348 and arginine 390 each contribute to the phosphoenolpyruvate site.

It belongs to the EPSP synthase family. As to quaternary structure, monomer.

The protein localises to the cytoplasm. The enzyme catalyses 3-phosphoshikimate + phosphoenolpyruvate = 5-O-(1-carboxyvinyl)-3-phosphoshikimate + phosphate. It functions in the pathway metabolic intermediate biosynthesis; chorismate biosynthesis; chorismate from D-erythrose 4-phosphate and phosphoenolpyruvate: step 6/7. Its function is as follows. Catalyzes the transfer of the enolpyruvyl moiety of phosphoenolpyruvate (PEP) to the 5-hydroxyl of shikimate-3-phosphate (S3P) to produce enolpyruvyl shikimate-3-phosphate and inorganic phosphate. This Syntrophotalea carbinolica (strain DSM 2380 / NBRC 103641 / GraBd1) (Pelobacter carbinolicus) protein is 3-phosphoshikimate 1-carboxyvinyltransferase.